We begin with the raw amino-acid sequence, 209 residues long: dITP/XTP pyrophosphatase (209 aa).

7–12 (TGNKGK) lines the substrate pocket. Aspartate 73 serves as the catalytic Proton acceptor. Aspartate 73 provides a ligand contact to Mg(2+). Residues serine 74, 155-158 (FGYD), lysine 178, and 183-184 (HR) contribute to the substrate site.

It belongs to the HAM1 NTPase family. As to quaternary structure, homodimer. Mg(2+) serves as cofactor.

The enzyme catalyses XTP + H2O = XMP + diphosphate + H(+). It carries out the reaction dITP + H2O = dIMP + diphosphate + H(+). It catalyses the reaction ITP + H2O = IMP + diphosphate + H(+). Pyrophosphatase that catalyzes the hydrolysis of nucleoside triphosphates to their monophosphate derivatives, with a high preference for the non-canonical purine nucleotides XTP (xanthosine triphosphate), dITP (deoxyinosine triphosphate) and ITP. Seems to function as a house-cleaning enzyme that removes non-canonical purine nucleotides from the nucleotide pool, thus preventing their incorporation into DNA/RNA and avoiding chromosomal lesions. In Sulfurovum sp. (strain NBC37-1), this protein is dITP/XTP pyrophosphatase.